Consider the following 701-residue polypeptide: MTASHSDSLVVLFGATAGAYGAKLGSDERELILLVWQVVDLPSKKVGTLHKSLVKADNLELSDQCREVSGLTAEGLGKAEPLDRVLQQFIQLVSSDLKVFGRNSYTLCSDGQLLIRQVLHPETSKKNFLLSDCFYSFYDLRKEFHTCYPSSAAVKDQTIKTMAEYLGLGTDEAEEDFGVWQVKTMVAIIFSMLSENCDHIFTDPETVKYKYETGPCSKSETVDSETVIRARGLPWQSSDQDIARFFKGLNIAKGGVALCLNAQGRRNGEALVRFVNSEQRDLALERHKHHMGSRYIEVYKATGEEFLKIAGGTSNEVAQFLSKENQVIIRMRGLPFTATQEDVLGFLGPECPVTGGKEGLLFVKYPDGRPTGDAFVLFSCEEYAQNALKKHKEILGKRYIELFRSTAAEVQQVLNRYMSTPLIPTLPTPIIPVIPPPYTIATGSIRDCVRLRGLPYTAGIDDILDFMGDATADIKPHGVHMVLNQQGRPSGDAFIQMKSADKAFMVAQKCHKKMMKDRYVEVFQCSGEEMNFVLMGGTLNRSGLSPPPCLSPPAYAAFQTAAVIPAEAALYQPQALLPTARTPQASAAAPPAVTYYPAQAAQLYMNYTAYYPSPPVSPTTVGYLAAPPGAVAAAATATHTPLLPQPGALVRMQGLPYNTGMKEILSFFQGYQYAPDDYNGLIQLSEQARSVLQAPKEWVCL.

3 RRM domains span residues 226 to 303 (TVIR…KATG), 327 to 407 (VIIR…RSTA), and 448 to 523 (CVRL…VEVF).

This sequence belongs to the ESRP family.

Its subcellular location is the nucleus. Functionally, mRNA splicing factor that regulates the formation of epithelial cell-specific isoforms. Specifically regulates the expression of FGFR2-IIIb, an epithelial cell-specific isoform of FGFR2. Acts by directly binding specific sequences in mRNAs. Binds the GU-rich sequence motifs in the ISE/ISS-3, a cis-element regulatory region present in the mRNA of FGFR2. This Gallus gallus (Chicken) protein is Epithelial splicing regulatory protein 2 (ESRP2).